A 56-amino-acid chain; its full sequence is Serine protease inhibitor Kazal-type 1 (56 aa).

The 54-residue stretch at 3–56 (PQREATCTSEVSGCPKIYNPVCGTDGITYSNECVLCSENKKRQTPVLIQKSGPC) folds into the Kazal-like domain. Cystine bridges form between C9-C38, C16-C35, and C24-C56.

Its subcellular location is the secreted. In terms of biological role, serine protease inhibitor which exhibits anti-trypsin activity. In the pancreas, protects against trypsin-catalyzed premature activation of zymogens. Its function is as follows. In the male reproductive tract, binds to sperm heads where it modulates sperm capacitance by inhibiting calcium uptake and nitrogen oxide (NO) production. The polypeptide is Serine protease inhibitor Kazal-type 1 (SPINK1) (Sus scrofa (Pig)).